A 135-amino-acid polypeptide reads, in one-letter code: Protein KRTCAP2 homolog (135 aa).

A run of 4 helical transmembrane segments spans residues 1 to 21 (MAVSSGTSGMLATCLFMLLFA), 35 to 55 (PMAIVGGFLGSVLFILILTAI), 69 to 89 (TKLIPEVVIALVIAMAASGMV), and 93 to 113 (CITTCLIFSIVALYYVSRISI).

It belongs to the KRTCAP2 family. In terms of assembly, component of the oligosaccharyltransferase (OST) complex.

The protein localises to the membrane. Its function is as follows. Subunit of the oligosaccharyl transferase (OST) complex that catalyzes the initial transfer of a defined glycan (Glc(3)Man(9)GlcNAc(2) in eukaryotes) from the lipid carrier dolichol-pyrophosphate to an asparagine residue within an Asn-X-Ser/Thr consensus motif in nascent polypeptide chains, the first step in protein N-glycosylation. N-glycosylation occurs cotranslationally and the complex associates with the Sec61 complex at the channel-forming translocon complex that mediates protein translocation across the endoplasmic reticulum (ER). All subunits are required for a maximal enzyme activity. The sequence is that of Protein KRTCAP2 homolog from Ixodes scapularis (Black-legged tick).